A 393-amino-acid polypeptide reads, in one-letter code: NAD(P)H-quinone oxidoreductase subunit H, chloroplastic (393 aa).

The protein belongs to the complex I 49 kDa subunit family. NDH is composed of at least 16 different subunits, 5 of which are encoded in the nucleus.

It is found in the plastid. Its subcellular location is the chloroplast thylakoid membrane. It catalyses the reaction a plastoquinone + NADH + (n+1) H(+)(in) = a plastoquinol + NAD(+) + n H(+)(out). The enzyme catalyses a plastoquinone + NADPH + (n+1) H(+)(in) = a plastoquinol + NADP(+) + n H(+)(out). Its function is as follows. NDH shuttles electrons from NAD(P)H:plastoquinone, via FMN and iron-sulfur (Fe-S) centers, to quinones in the photosynthetic chain and possibly in a chloroplast respiratory chain. The immediate electron acceptor for the enzyme in this species is believed to be plastoquinone. Couples the redox reaction to proton translocation, and thus conserves the redox energy in a proton gradient. The polypeptide is NAD(P)H-quinone oxidoreductase subunit H, chloroplastic (Nicotiana tomentosiformis (Tobacco)).